We begin with the raw amino-acid sequence, 473 residues long: ATP synthase subunit beta (473 aa).

153–160 serves as a coordination point for ATP; the sequence is GGAGVGKT.

It belongs to the ATPase alpha/beta chains family. F-type ATPases have 2 components, CF(1) - the catalytic core - and CF(0) - the membrane proton channel. CF(1) has five subunits: alpha(3), beta(3), gamma(1), delta(1), epsilon(1). CF(0) has three main subunits: a(1), b(2) and c(9-12). The alpha and beta chains form an alternating ring which encloses part of the gamma chain. CF(1) is attached to CF(0) by a central stalk formed by the gamma and epsilon chains, while a peripheral stalk is formed by the delta and b chains.

The protein localises to the cell inner membrane. The catalysed reaction is ATP + H2O + 4 H(+)(in) = ADP + phosphate + 5 H(+)(out). Produces ATP from ADP in the presence of a proton gradient across the membrane. The catalytic sites are hosted primarily by the beta subunits. In Rickettsia akari (strain Hartford), this protein is ATP synthase subunit beta.